The sequence spans 287 residues: PsbP domain-containing protein 1, chloroplastic (287 aa).

The protein belongs to the PsbP family. Partially associated with photosystem I (PSI) complex, but is not a subunit of the complex. Interacts with PsaA and PsaB, but not with PasF.

It is found in the plastid. The protein resides in the chloroplast thylakoid lumen. In terms of biological role, photosystem I assembly factor that assists the proper folding and integration of PsaB and PsaA into the thylakoid membrane. In Arabidopsis thaliana (Mouse-ear cress), this protein is PsbP domain-containing protein 1, chloroplastic (PPD1).